We begin with the raw amino-acid sequence, 65 residues long: Beta-toxin Am IT (65 aa).

E1 bears the Pyrrolidone carboxylic acid (Glu); partial mark. Residues 1–64 (EHGYLLDKYT…LWNYKTNKCK (64 aa)) enclose the LCN-type CS-alpha/beta domain. 4 disulfide bridges follow: C12–C63, C16–C38, C23–C45, and C27–C47. S65 carries the serine amide modification.

This sequence belongs to the long (4 C-C) scorpion toxin superfamily. Sodium channel inhibitor family. In terms of tissue distribution, expressed by the venom gland.

The protein resides in the secreted. Functionally, has a toxic effect on insects and mammals. On German cockroach larvae, it provokes contraction, paralysis and lethality. Intracerebroventricular injection into mice causes severe neurotoxic symptoms. It fully competes with the binding of the iodinated Css4 (AC P60266) on rat brain synaptosomes, with moderate affinity and in a concentration-dependent manner (EC(50)=25 nM). It may act on both site 3 and site 4 of voltage-gated sodium channels. This is Beta-toxin Am IT from Androctonus mauritanicus mauritanicus (Scorpion).